The following is a 310-amino-acid chain: Thioredoxin reductase (310 aa).

FAD is bound at residue 34–41 (NGMQPGGQ). Cys135 and Cys138 are disulfide-bonded. 281–290 (DVQDKIYRQA) contributes to the FAD binding site.

This sequence belongs to the class-II pyridine nucleotide-disulfide oxidoreductase family. Homodimer. It depends on FAD as a cofactor.

The protein resides in the cytoplasm. It carries out the reaction [thioredoxin]-dithiol + NADP(+) = [thioredoxin]-disulfide + NADPH + H(+). The protein is Thioredoxin reductase (trxB) of Rickettsia conorii (strain ATCC VR-613 / Malish 7).